The primary structure comprises 203 residues: MKILVTAFDPFGGESVNPSYEVLKNLKDNIEGAEIIKLQVPTAFYVSVEKAIEKIKEVNPDAVLSIGQAGGRYDISVERVAINIDDARIPDNMGQQPIDIPIDPEGPPAYFATIPIKEIVEAIKKENLPASVSNSAGTYVCNHLMYGILNYIHKNKLNIKAGFIHIPYLPEQVLEKPNTPYMSLSDMVKAIETAIKVIVKAMA.

Active-site residues include Glu-78, Cys-141, and His-165.

It belongs to the peptidase C15 family. As to quaternary structure, homotetramer.

Its subcellular location is the cytoplasm. The catalysed reaction is Release of an N-terminal pyroglutamyl group from a polypeptide, the second amino acid generally not being Pro.. In terms of biological role, removes 5-oxoproline from various penultimate amino acid residues except L-proline. The sequence is that of Pyrrolidone-carboxylate peptidase 1 from Caldanaerobacter subterraneus subsp. tengcongensis (strain DSM 15242 / JCM 11007 / NBRC 100824 / MB4) (Thermoanaerobacter tengcongensis).